Consider the following 334-residue polypeptide: MCDQYCISFADVEKAHINIRDFIHLTPVLTSSILNQITGRNLFFKCELFQKTGSFKIRGALNAIRGLISAHPEEKPRAVVAHSSGNHGQALSFAARLEGIPAYVIVPETAPNCKKLAIQAYGASIVYSEQSEESRENITKRIAEETEGIMVHPNQEPAVIAGQGTIAMEVLNQVPLVDALVVPVGGGGMLAGIAVTVKALRPSVKVYAAEPLNADDCYQSKLKGELTPNPYPPETIADGIKSSIGLNTWPIIRDLVDDVFTVTEDEIKYATQLVWERMKLLIEPTAGVGVAVVLSQHFRTVPAEVKNICIVLSGGNVDLTSLTWVKKQDEKAAP.

E13 is a binding site for Mg(2+). Positions 31, 32, 33, 51, and 52 each coordinate ATP. Residues K56 and S84 each act as proton acceptor in the active site. The residue at position 56 (K56) is an N6-(pyridoxal phosphate)lysine. Position 86 (N86) interacts with pyridoxal 5'-phosphate. Q89 provides a ligand contact to ATP. An S-nitrosocysteine modification is found at C113. Y121 lines the ATP pocket. N154 is a pyridoxal 5'-phosphate binding site. D178 contacts Mg(2+). Residues G185, G186, G187, G188, and M189 each coordinate pyridoxal 5'-phosphate. 4 residues coordinate Mg(2+): E210, A214, D216, and N247. E210, A214, D216, and N247 together coordinate Ca(2+). E210, A214, and D216 together coordinate Mn(2+). Residue K279 coordinates ATP. Residue S313 participates in pyridoxal 5'-phosphate binding. Residue N316 coordinates ATP.

Belongs to the serine/threonine dehydratase family. As to quaternary structure, homodimer. It depends on Mg(2+) as a cofactor. Mn(2+) serves as cofactor. Requires Ca(2+) as cofactor. The cofactor is pyridoxal 5'-phosphate. In terms of processing, S-nitrosylated, leading to decrease the enzyme activity.

The enzyme catalyses L-serine = D-serine. The catalysed reaction is L-serine = pyruvate + NH4(+). It catalyses the reaction D-serine = pyruvate + NH4(+). In terms of biological role, catalyzes the synthesis of D-serine from L-serine. D-serine is a key coagonist with glutamate at NMDA receptors. Has dehydratase activity towards both L-serine and D-serine. This chain is Serine racemase (SRR), found in Bos taurus (Bovine).